A 193-amino-acid chain; its full sequence is Segregation and condensation protein B (193 aa).

Belongs to the ScpB family. Homodimer. Homodimerization may be required to stabilize the binding of ScpA to the Smc head domains. Component of a cohesin-like complex composed of ScpA, ScpB and the Smc homodimer, in which ScpA and ScpB bind to the head domain of Smc. The presence of the three proteins is required for the association of the complex with DNA.

The protein resides in the cytoplasm. In terms of biological role, participates in chromosomal partition during cell division. May act via the formation of a condensin-like complex containing Smc and ScpA that pull DNA away from mid-cell into both cell halves. This chain is Segregation and condensation protein B, found in Shouchella clausii (strain KSM-K16) (Alkalihalobacillus clausii).